The sequence spans 156 residues: MSRRGNVKKRPVPPDPVYNSTLLSMTIRRVMRSGKKSLASSIVYNALASVGEKTGEDPLEVFEKAIKNLTPLVEVKARRVGGATYQVPMEVRPARGTALALRWLVHFSRARGGRTMESKLANEIMDAANETGAAIKKREETHRMAEANKAFAHYRY.

Belongs to the universal ribosomal protein uS7 family. In terms of assembly, part of the 30S ribosomal subunit. Contacts proteins S9 and S11.

Functionally, one of the primary rRNA binding proteins, it binds directly to 16S rRNA where it nucleates assembly of the head domain of the 30S subunit. Is located at the subunit interface close to the decoding center, probably blocks exit of the E-site tRNA. This is Small ribosomal subunit protein uS7 from Synechocystis sp. (strain ATCC 27184 / PCC 6803 / Kazusa).